A 74-amino-acid chain; its full sequence is Fulgimotoxin (74 aa).

Q1 bears the Pyrrolidone carboxylic acid mark. Intrachain disulfides connect C10–C34, C13–C21, C27–C51, C55–C66, and C67–C72.

This sequence belongs to the three-finger toxin family. Ancestral subfamily. Boigatoxin sub-subfamily. In terms of assembly, monomer. The N-terminus is blocked. In terms of processing, contains 5 disulfide bonds. As to expression, expressed by the venom gland.

The protein resides in the secreted. Reptile-specific three-finger toxin that is lethal at low doses for lizards, but not for mice. Probably acts as a neurotoxin. The sequence is that of Fulgimotoxin from Oxybelis fulgidus (Green vine snake).